The chain runs to 213 residues: T-cell surface glycoprotein CD8 beta chain (213 aa).

The signal sequence occupies residues 1 to 21; it reads MQPWLWLVFSMKLAALWSSSA. One can recognise an Ig-like V-type domain in the interval 22-133; the sequence is LIQTPSSLLV…KMVFGTGTKL (112 aa). The Extracellular portion of the chain corresponds to 22–175; it reads LIQTPSSLLV…QKGLTCSLTT (154 aa). Residue Asn-34 is glycosylated (N-linked (GlcNAc...) asparagine). A disulfide bridge connects residues Cys-41 and Cys-117. The chain crosses the membrane as a helical span at residues 176–196; that stretch reads LSLLVVCILLLLAFLGVAVYF. The Cytoplasmic segment spans residues 197–213; sequence YCVRRRARIHFMKQFHK.

As to quaternary structure, forms disulfide-linked heterodimers with CD8A at the cell surface. Interacts with CD3D; this interaction couples TCR-CD3 with CD8. Interacts with LCK. Palmitoylated at the cytoplasmic tail and thereby targets the heterodimer CD8A/CD8B to lipid rafts unlike CD8A homodimers.

It is found in the membrane. In terms of biological role, integral membrane glycoprotein that plays an essential role in the immune response and serves multiple functions in responses against both external and internal offenses. In T-cells, functions primarily as a coreceptor for MHC class I molecule:peptide complex. The antigens presented by class I peptides are derived from cytosolic proteins while class II derived from extracellular proteins. Interacts simultaneously with the T-cell receptor (TCR) and the MHC class I proteins presented by antigen presenting cells (APCs). In turn, recruits the Src kinase LCK to the vicinity of the TCR-CD3 complex. A palmitoylation site in the cytoplasmic tail of CD8B chain contributes to partitioning of CD8 into the plasma membrane lipid rafts where signaling proteins are enriched. Once LCK recruited, it initiates different intracellular signaling pathways by phosphorylating various substrates ultimately leading to lymphokine production, motility, adhesion and activation of cytotoxic T-lymphocytes (CTLs). Additionally, plays a critical role in thymic selection of CD8+ T-cells. This is T-cell surface glycoprotein CD8 beta chain (Cd8b) from Mus musculus (Mouse).